The chain runs to 524 residues: MKKIMLIASAMSALSLPFSASAIELGEEGGLECGPYGKVGIVGGMITGAESTRLDSTDSEGKKHLSLTTGLPFGGTLAAGMTIAPGFRAELGVMYLRNISAEVEVGKGKVDSKGEIKADSGGGTDTPIRKRFKLTPPQPTIMPISIADRDVGVDTDILAQAAAGQPQLTVEQRAADRIAWLKNYAGIDYMVPDPQNPNARVINPVLLNITQGPPNVQPRPRQNLDILDHGQWRHLVVGVTALSHANKPSVTPVKVLSDKITKIYSDIKPFADIAGIDVPDTGLPNSASVEQIQSKMQELNDVLEDLRDSFDGYMGNAFANQIQLNFVMPQQAQQQQGQGQQQQAQATAQEAVAAAAVRLLNGNDQIAQLYKDLVKLQRHAGVKKAMEKLAAQQEEDAKNQGEGDCKQQQGASEKSKEGKGKETEFDLSMIVGQVKLYADLFTTESFSIYAGVGAGLAHTYGKIDDKDIKGHTGMVASGALGVAINAAEGVYVDLEGSYMHSFSKIEEKYSINPLMASVGVRYNF.

A signal peptide spans 1 to 22 (MKKIMLIASAMSALSLPFSASA). The chain crosses the membrane as a helical span at residues 67–87 (LTTGLPFGGTLAAGMTIAPGF). Disordered regions lie at residues 112–132 (SKGE…RKRF) and 387–422 (EKLA…KGKE). Basic and acidic residues-rich tracts occupy residues 395–405 (EDAKNQGEGDC) and 413–422 (EKSKEGKGKE). Residues 472-492 (TGMVASGALGVAINAAEGVYV) form a helical membrane-spanning segment.

It is found in the cell membrane. May be an adherent factor for rickettsial adsorption to the host-cell surface and a determinant of virulence of individual rickettsial strain. It is the major outer membrane protein. This is 56 kDa type-specific antigen from Orientia tsutsugamushi (Rickettsia tsutsugamushi).